A 415-amino-acid chain; its full sequence is Imidazolonepropionase (415 aa).

Fe(3+) is bound by residues His-74 and His-76. Zn(2+) is bound by residues His-74 and His-76. 4-imidazolone-5-propanoate-binding residues include Arg-83, Tyr-146, and His-179. Position 146 (Tyr-146) interacts with N-formimidoyl-L-glutamate. Position 244 (His-244) interacts with Fe(3+). His-244 is a Zn(2+) binding site. Residue Gln-247 participates in 4-imidazolone-5-propanoate binding. Residue Asp-319 participates in Fe(3+) binding. Asp-319 contributes to the Zn(2+) binding site. N-formimidoyl-L-glutamate contacts are provided by Asn-321 and Gly-323. Residue Thr-324 coordinates 4-imidazolone-5-propanoate.

This sequence belongs to the metallo-dependent hydrolases superfamily. HutI family. The cofactor is Zn(2+). Fe(3+) is required as a cofactor.

It is found in the cytoplasm. It catalyses the reaction 4-imidazolone-5-propanoate + H2O = N-formimidoyl-L-glutamate. It participates in amino-acid degradation; L-histidine degradation into L-glutamate; N-formimidoyl-L-glutamate from L-histidine: step 3/3. Functionally, catalyzes the hydrolytic cleavage of the carbon-nitrogen bond in imidazolone-5-propanoate to yield N-formimidoyl-L-glutamate. It is the third step in the universal histidine degradation pathway. This is Imidazolonepropionase from Cupriavidus metallidurans (strain ATCC 43123 / DSM 2839 / NBRC 102507 / CH34) (Ralstonia metallidurans).